Here is a 728-residue protein sequence, read N- to C-terminus: Putative auxin response factor 20 (728 aa).

The segment at residues 119 to 233 (FFEKQLSPAD…ELLVGVRRAP (115 aa)) is a DNA-binding region (TF-B3 1). Low complexity-rich tracts occupy residues 665 to 689 (PQGS…TTSA) and 700 to 712 (ASSS…IIPS). Residues 665–728 (PQGSDEEAAA…IVNPRDGSQG (64 aa)) are disordered.

This sequence belongs to the ARF family. As to quaternary structure, homo and heterodimers.

Its subcellular location is the nucleus. Auxin response factors (ARFs) are transcriptional factors that bind specifically to the DNA sequence 5'-TGTCTC-3' found in the auxin-responsive promoter elements (AuxREs). The chain is Putative auxin response factor 20 (ARF20) from Oryza sativa subsp. japonica (Rice).